Consider the following 113-residue polypeptide: Large ribosomal subunit protein eL31 (113 aa).

This sequence belongs to the eukaryotic ribosomal protein eL31 family. As to quaternary structure, component of the large ribosomal subunit (LSU). Mature yeast ribosomes consist of a small (40S) and a large (60S) subunit. The 40S small subunit contains 1 molecule of ribosomal RNA (18S rRNA) and at least 33 different proteins. The large 60S subunit contains 3 rRNA molecules (25S, 5.8S and 5S rRNA) and at least 46 different proteins.

It localises to the cytoplasm. Functionally, component of the ribosome, a large ribonucleoprotein complex responsible for the synthesis of proteins in the cell. The small ribosomal subunit (SSU) binds messenger RNAs (mRNAs) and translates the encoded message by selecting cognate aminoacyl-transfer RNA (tRNA) molecules. The large subunit (LSU) contains the ribosomal catalytic site termed the peptidyl transferase center (PTC), which catalyzes the formation of peptide bonds, thereby polymerizing the amino acids delivered by tRNAs into a polypeptide chain. The nascent polypeptides leave the ribosome through a tunnel in the LSU and interact with protein factors that function in enzymatic processing, targeting, and the membrane insertion of nascent chains at the exit of the ribosomal tunnel. The chain is Large ribosomal subunit protein eL31 (rpl31) from Schizosaccharomyces pombe (strain 972 / ATCC 24843) (Fission yeast).